Here is a 405-residue protein sequence, read N- to C-terminus: Beta-citrylglutamate synthase B (405 aa).

The ATP-grasp domain maps to 115 to 300; it reads FQELAGHGVP…VAGIVADFVL (186 aa). ATP-binding positions include Lys154, 189–199, and Arg215; that span reads QEYVKESHGRD. Mg(2+) contacts are provided by Asp260, Glu273, and Asn275. Mn(2+) is bound by residues Asp260, Glu273, and Asn275. The tract at residues 359–387 is disordered; it reads AMSTMSTSSTSSESEADLTETGPTPVGAN. Positions 360–371 are enriched in low complexity; sequence MSTMSTSSTSSE.

This sequence belongs to the RimK family. Requires Mg(2+) as cofactor. It depends on Mn(2+) as a cofactor.

The protein localises to the cytoplasm. The enzyme catalyses citrate + L-glutamate + ATP = beta-citrylglutamate + ADP + phosphate + H(+). The catalysed reaction is N-acetyl-L-aspartate + L-glutamate + ATP = N-acetyl-L-aspartyl-L-glutamate + ADP + phosphate + H(+). Functionally, catalyzes the synthesis of beta-citryl-L-glutamate and N-acetyl-L-aspartyl-L-glutamate. Beta-citryl-L-glutamate is synthesized more efficiently than N-acetyl-L-aspartyl-L-glutamate. The protein is Beta-citrylglutamate synthase B (rimklb) of Danio rerio (Zebrafish).